Consider the following 387-residue polypeptide: Chaperone protein DnaJ (387 aa).

Residues 5–70 (DYYEVLGLQK…DKKAKYDQFG (66 aa)) enclose the J domain. Residues 144 to 226 (GCEKEISITR…CKGKGTVRKN (83 aa)) form a CR-type zinc finger. The Zn(2+) site is built by cysteine 157, cysteine 160, cysteine 174, cysteine 177, cysteine 200, cysteine 203, cysteine 214, and cysteine 217. 4 CXXCXGXG motif repeats span residues 157-164 (CETCHGTG), 174-181 (CPKCNGSG), 200-207 (CDQCGGTG), and 214-221 (CPDCKGKG).

Belongs to the DnaJ family. Homodimer. Requires Zn(2+) as cofactor.

It localises to the cytoplasm. Its function is as follows. Participates actively in the response to hyperosmotic and heat shock by preventing the aggregation of stress-denatured proteins and by disaggregating proteins, also in an autonomous, DnaK-independent fashion. Unfolded proteins bind initially to DnaJ; upon interaction with the DnaJ-bound protein, DnaK hydrolyzes its bound ATP, resulting in the formation of a stable complex. GrpE releases ADP from DnaK; ATP binding to DnaK triggers the release of the substrate protein, thus completing the reaction cycle. Several rounds of ATP-dependent interactions between DnaJ, DnaK and GrpE are required for fully efficient folding. Also involved, together with DnaK and GrpE, in the DNA replication of plasmids through activation of initiation proteins. This Clostridium perfringens (strain 13 / Type A) protein is Chaperone protein DnaJ.